A 185-amino-acid polypeptide reads, in one-letter code: Ribosome-recycling factor (185 aa).

Belongs to the RRF family.

It is found in the cytoplasm. Its function is as follows. Responsible for the release of ribosomes from messenger RNA at the termination of protein biosynthesis. May increase the efficiency of translation by recycling ribosomes from one round of translation to another. The polypeptide is Ribosome-recycling factor (Wolbachia pipientis subsp. Culex pipiens (strain wPip)).